The following is a 638-amino-acid chain: DNA gyrase subunit B (638 aa).

In terms of domain architecture, Toprim spans 422–536 (SELYIVEGDS…NGYVYIAQPP (115 aa)). 3 residues coordinate Mg(2+): E428, D501, and D503.

Belongs to the type II topoisomerase GyrB family. In terms of assembly, heterotetramer, composed of two GyrA and two GyrB chains. In the heterotetramer, GyrA contains the active site tyrosine that forms a transient covalent intermediate with DNA, while GyrB binds cofactors and catalyzes ATP hydrolysis. Mg(2+) is required as a cofactor. The cofactor is Mn(2+). Ca(2+) serves as cofactor.

It is found in the cytoplasm. The catalysed reaction is ATP-dependent breakage, passage and rejoining of double-stranded DNA.. In terms of biological role, a type II topoisomerase that negatively supercoils closed circular double-stranded (ds) DNA in an ATP-dependent manner to modulate DNA topology and maintain chromosomes in an underwound state. Negative supercoiling favors strand separation, and DNA replication, transcription, recombination and repair, all of which involve strand separation. Also able to catalyze the interconversion of other topological isomers of dsDNA rings, including catenanes and knotted rings. Type II topoisomerases break and join 2 DNA strands simultaneously in an ATP-dependent manner. This Bacillus subtilis (strain 168) protein is DNA gyrase subunit B.